A 292-amino-acid chain; its full sequence is Ribosomal protein L11 methyltransferase (292 aa).

S-adenosyl-L-methionine contacts are provided by threonine 144, glycine 165, aspartate 187, and asparagine 229.

The protein belongs to the methyltransferase superfamily. PrmA family.

The protein localises to the cytoplasm. The enzyme catalyses L-lysyl-[protein] + 3 S-adenosyl-L-methionine = N(6),N(6),N(6)-trimethyl-L-lysyl-[protein] + 3 S-adenosyl-L-homocysteine + 3 H(+). Its function is as follows. Methylates ribosomal protein L11. The polypeptide is Ribosomal protein L11 methyltransferase (Azotobacter vinelandii (strain DJ / ATCC BAA-1303)).